Consider the following 205-residue polypeptide: GTP cyclohydrolase-2 (205 aa).

Position 49–53 (49–53 (RLHSE)) interacts with GTP. Zn(2+) contacts are provided by cysteine 54, cysteine 65, and cysteine 67. GTP-binding positions include glutamine 70, 92–94 (EGR), and threonine 114. The Proton acceptor role is filled by aspartate 126. Catalysis depends on arginine 128, which acts as the Nucleophile. Residues threonine 149 and lysine 154 each coordinate GTP.

The protein belongs to the GTP cyclohydrolase II family. Zn(2+) is required as a cofactor.

It carries out the reaction GTP + 4 H2O = 2,5-diamino-6-hydroxy-4-(5-phosphoribosylamino)-pyrimidine + formate + 2 phosphate + 3 H(+). Its pathway is cofactor biosynthesis; riboflavin biosynthesis; 5-amino-6-(D-ribitylamino)uracil from GTP: step 1/4. Functionally, catalyzes the conversion of GTP to 2,5-diamino-6-ribosylamino-4(3H)-pyrimidinone 5'-phosphate (DARP), formate and pyrophosphate. This chain is GTP cyclohydrolase-2, found in Pseudomonas paraeruginosa (strain DSM 24068 / PA7) (Pseudomonas aeruginosa (strain PA7)).